The sequence spans 250 residues: 2,3-bisphosphoglycerate-dependent phosphoglycerate mutase (250 aa).

Residues arginine 10–asparagine 17, threonine 23–glycine 24, arginine 62, glutamate 89–tyrosine 92, lysine 100, arginine 116–arginine 117, and glycine 185–asparagine 186 each bind substrate. The active-site Tele-phosphohistidine intermediate is the histidine 11. Catalysis depends on glutamate 89, which acts as the Proton donor/acceptor.

This sequence belongs to the phosphoglycerate mutase family. BPG-dependent PGAM subfamily. Homodimer.

It catalyses the reaction (2R)-2-phosphoglycerate = (2R)-3-phosphoglycerate. It functions in the pathway carbohydrate degradation; glycolysis; pyruvate from D-glyceraldehyde 3-phosphate: step 3/5. In terms of biological role, catalyzes the interconversion of 2-phosphoglycerate and 3-phosphoglycerate. The polypeptide is 2,3-bisphosphoglycerate-dependent phosphoglycerate mutase (Salmonella paratyphi A (strain ATCC 9150 / SARB42)).